The primary structure comprises 229 residues: MAHVGSRKRSRSRSRSRSGRRGSEKRSKRSSKDASRNCSASRSQGHKAGSASGVEERSKHKAQRTSRSSSTSSSSSSSSSASSSSSSDGRKKRAKHKEKKRKKKKKKRKKKLKKRVKEKAVAVHQAEALPGPSLDQWHRSAGEDNDGPVLTDEQKSRIQAMKPMTKEEWDARQSVIRKVVDPETGRTRLIKGDGEVLEEIVTKERHREINKQATRGDGLAFQMRTGLLP.

Residues 1–20 (MAHVGSRKRSRSRSRSRSGR) show a composition bias toward basic residues. The tract at residues 1-152 (MAHVGSRKRS…EDNDGPVLTD (152 aa)) is disordered. The span at 21-35 (RGSEKRSKRSSKDAS) shows a compositional bias: basic and acidic residues. Residues 66-87 (SRSSSTSSSSSSSSSASSSSSS) are compositionally biased toward low complexity. The span at 90–117 (RKKRAKHKEKKRKKKKKKRKKKLKKRVK) shows a compositional bias: basic residues. Phosphoserine is present on residues serine 140 and serine 174. Lysine 191 is covalently cross-linked (Glycyl lysine isopeptide (Lys-Gly) (interchain with G-Cter in SUMO2)).

Belongs to the ARL6IP4 family. In terms of assembly, interacts with ZCCHC17. Interacts with SRSF2. Interacts with ARL6. As to expression, widely expressed. Expressed at high level in testis and thymus.

The protein localises to the nucleus. Its subcellular location is the nucleolus. It localises to the nucleus speckle. Involved in modulating alternative pre-mRNA splicing with either 5' distal site activation or preferential use of 3' proximal site. The polypeptide is ADP-ribosylation factor-like protein 6-interacting protein 4 (Arl6ip4) (Mus musculus (Mouse)).